A 320-amino-acid polypeptide reads, in one-letter code: Cytochrome f (320 aa).

A signal peptide spans 1 to 36 (MKLNSLINLIQKSIYSCTLLLTILNIICIAPNSSNA). Positions 37, 57, 60, and 61 each coordinate heme. Residues 286 to 305 (IKGMIAFFFVSVLAQIFFVL) form a helical membrane-spanning segment.

It belongs to the cytochrome f family. The 4 large subunits of the cytochrome b6-f complex are cytochrome b6, subunit IV (17 kDa polypeptide, petD), cytochrome f and the Rieske protein, while the 4 small subunits are PetG, PetL, PetM and PetN. The complex functions as a dimer. It depends on heme as a cofactor.

It is found in the plastid. The protein localises to the chloroplast thylakoid membrane. Component of the cytochrome b6-f complex, which mediates electron transfer between photosystem II (PSII) and photosystem I (PSI), cyclic electron flow around PSI, and state transitions. In Porphyra purpurea (Red seaweed), this protein is Cytochrome f (petA).